The primary structure comprises 601 residues: Putative Lon protease homolog (601 aa).

The Lon proteolytic domain maps to G363–R560. Active-site residues include S455 and K498.

The protein belongs to the peptidase S16 family.

The protein is Putative Lon protease homolog of Haemophilus influenzae (strain ATCC 51907 / DSM 11121 / KW20 / Rd).